A 373-amino-acid polypeptide reads, in one-letter code: Class E vacuolar protein-sorting machinery protein hse1 (373 aa).

A VHS domain is found at 16-146 (ATDEKNTKEK…KIRKLDIVDL (131 aa)). Positions 164-183 (REEEELQYALALSLSESTAQ) constitute a UIM domain. 2 stretches are compositionally biased toward polar residues: residues 180 to 192 (STAQSNKVENPQS) and 199 to 213 (QKTNQRQESNLATSP). A disordered region spans residues 180–213 (STAQSNKVENPQSTKDEPLQKTNQRQESNLATSP). One can recognise an SH3 domain in the interval 215–274 (STVSRVRALYDFAATEQGELSFKKGDIILVLESVYKDWWKGSCKNAVGIFPVNYVQRVVE).

This sequence belongs to the STAM family. Component of the ESCRT-0 complex composed of hse1 and sst4.

The protein localises to the endosome membrane. Functionally, component of the ESCRT-0 complex which is the sorting receptor for ubiquitinated cargo proteins at the multivesicular body (MVB). This is Class E vacuolar protein-sorting machinery protein hse1 (hse1) from Schizosaccharomyces pombe (strain 972 / ATCC 24843) (Fission yeast).